Consider the following 324-residue polypeptide: Olfactory receptor 1L3 (324 aa).

The Extracellular portion of the chain corresponds to 1–25 (MGMSNLTRLSEFILLGLSSRSEDQR). Asn5 is a glycosylation site (N-linked (GlcNAc...) asparagine). The helical transmembrane segment at 26–49 (PLFALFLIIYLVTLMGNLLIILAI) threads the bilayer. The Cytoplasmic portion of the chain corresponds to 50 to 57 (HSDPRLQN). The helical transmembrane segment at 58–79 (PMYFFLSILSFADICYTTVIVP) threads the bilayer. Topologically, residues 80–100 (KMLVNFLSEKKTISYAECLAQ) are extracellular. Cys97 and Cys189 form a disulfide bridge. Residues 101–120 (MYFFLVFGNIDSYLLAAMAI) form a helical membrane-spanning segment. Residues 121–139 (NRCVAICNPFHYVTVMNRR) lie on the Cytoplasmic side of the membrane. Residues 140 to 158 (CCVLLLAFPITFSYFHSLL) form a helical membrane-spanning segment. Topologically, residues 159 to 196 (HVLLVNRLTFCTSNVIHHFFCDVNPVLKLSCSSTFVNE) are extracellular. The chain crosses the membrane as a helical span at residues 197 to 219 (IVAMTEGLASVMAPFVCIIISYL). Residues 220-236 (RILIAVLKIPSAAGKHK) lie on the Cytoplasmic side of the membrane. A helical transmembrane segment spans residues 237-259 (AFSTCSSHLTVVILFYGSISYVY). The Extracellular portion of the chain corresponds to 260-271 (LQPLSSYTVKDR). Residues 272 to 291 (IATINYTVLTSVLNPFIYSL) traverse the membrane as a helical segment. Over 292 to 324 (RNKDMKRGLQKLINKIKSQMSRFSTKTNKICGP) the chain is Cytoplasmic.

The protein belongs to the G-protein coupled receptor 1 family.

Its subcellular location is the cell membrane. Functionally, odorant receptor. In Homo sapiens (Human), this protein is Olfactory receptor 1L3 (OR1L3).